A 391-amino-acid polypeptide reads, in one-letter code: Protein Wnt-2b (391 aa).

Disulfide bonds link Cys107–Cys118, Cys158–Cys166, Cys168–Cys188, Cys237–Cys251, and Cys239–Cys246. N-linked (GlcNAc...) asparagine glycosylation is present at Asn117. Residue Ser243 is the site of O-palmitoleoyl serine; by PORCN attachment. A glycan (N-linked (GlcNAc...) asparagine) is linked at Asn283. Intrachain disulfides connect Cys309/Cys340, Cys325/Cys335, Cys339/Cys379, Cys355/Cys370, Cys357/Cys367, and Cys362/Cys363.

It belongs to the Wnt family. Forms a soluble 1:1 complex with AFM; this prevents oligomerization and is required for prolonged biological activity. The complex with AFM may represent the physiological form in body fluids. Interacts with FZD4 and FZD5. In terms of processing, palmitoleoylation is required for efficient binding to frizzled receptors. Depalmitoleoylation leads to Wnt signaling pathway inhibition. As to expression, isoform 1 is expressed in adult heart, brain, placenta, lung, prostate, testis, ovary, small intestine and colon. In the adult brain, it is mainly found in the caudate nucleus, subthalamic nucleus and thalamus. Also detected in fetal brain, lung and kidney. Isoform 2 is expressed in fetal brain, fetal lung, fetal kidney, caudate nucleus, testis and cancer cell lines.

The protein localises to the secreted. It is found in the extracellular space. The protein resides in the extracellular matrix. Ligand for members of the frizzled family of seven transmembrane receptors. Functions in the canonical Wnt/beta-catenin signaling pathway. Plays a redundant role in embryonic lung development. The polypeptide is Protein Wnt-2b (WNT2B) (Homo sapiens (Human)).